The primary structure comprises 184 residues: Endothelial cell-specific molecule 1 (184 aa).

Positions 1-21 (MKSLLLLTTLLIPLHLGMAWS) are cleaved as a signal peptide. Residues 24 to 102 (YAVDCPEHCD…GDEFGVCKDC (79 aa)) enclose the IGFBP N-terminal domain. 6 disulfide bridges follow: Cys-28/Cys-51, Cys-32/Cys-53, Cys-37/Cys-54, Cys-43/Cys-57, Cys-65/Cys-83, and Cys-77/Cys-99. The interval 145–184 (RTSASQTERDAASGDGNAVREEIGDRNAARPSVMKWLNPR) is disordered. Positions 151-172 (TERDAASGDGNAVREEIGDRNA) are enriched in basic and acidic residues. Ser-157 carries O-linked (Xyl...) (chondroitin sulfate) serine glycosylation.

Post-translationally, O-glycosylated; contains chondroitin sulfate and dermatan sulfate. As to expression, pineal gland specific.

Its subcellular location is the secreted. Involved in angiogenesis; promotes angiogenic sprouting. May have potent implications in lung endothelial cell-leukocyte interactions. The protein is Endothelial cell-specific molecule 1 (Esm1) of Rattus norvegicus (Rat).